The following is an 85-amino-acid chain: MASFKIVIVCLALLVAVASARRRDMMSDDELDYHYSKRGIPCACDSDGPDIRSASLSGIVWMGSCPSGWKKCKSYYSIVADCCNQ.

Residues 1–20 form the signal peptide; that stretch reads MASFKIVIVCLALLVAVASA. Residues 21-36 constitute a propeptide that is removed on maturation; the sequence is RRRDMMSDDELDYHYS. 3 disulfides stabilise this stretch: Cys42–Cys82, Cys44–Cys72, and Cys65–Cys83.

This sequence belongs to the sea anemone sodium channel inhibitory toxin family. Type II subfamily. In terms of tissue distribution, expressed in ectodermal glands and in clumps outside of the extodermal layer. Is not expressed in nematocytes. In adult female tissues, shows similar expression levels in mesenteries (gametes-producing tissue), tentacles, pharynx and physa.

It is found in the secreted. Binds to site 3 of voltage-gated sodium channels and inhibits the inactivation process. Is highly active on DmNav1/TipE (drosophila) and is only extremely weakly active on rat Nav1.4-beta-1/SCN4A-SCN1B, and on human Nav1.5-beta-1/SCN5A-beta-1. This reveals high specificity for arthropod over mammalian channels. In vivo, when released into the medium, this recombinant toxin induces impaired swimming, paralysis and death of the crustacean A.nauplii within several hours. Also causes paralysis of cherry shrimps immediately after injection at very low doses. Its effect on zebrafish (D.rerio) larvae is also rapid, since it induces tail twitching accompanied by impaired swimming after 20 minutes and complete paralysis within 45 minutes. It has also been observed to cause death of zebrafish larvae within 1 hour. The chain is N.vectensis toxin 1 4 from Nematostella vectensis (Starlet sea anemone).